A 213-amino-acid chain; its full sequence is Glycerol-3-phosphate acyltransferase (213 aa).

Helical transmembrane passes span 3-23 (ILLA…VVVS), 51-71 (KAAI…VWLA), 78-98 (DVAV…PVFF), 115-135 (AVHP…AFFF), and 140-160 (LAAL…FGTP).

The protein belongs to the PlsY family. As to quaternary structure, probably interacts with PlsX.

It localises to the cell inner membrane. The catalysed reaction is an acyl phosphate + sn-glycerol 3-phosphate = a 1-acyl-sn-glycero-3-phosphate + phosphate. Its pathway is lipid metabolism; phospholipid metabolism. Catalyzes the transfer of an acyl group from acyl-phosphate (acyl-PO(4)) to glycerol-3-phosphate (G3P) to form lysophosphatidic acid (LPA). This enzyme utilizes acyl-phosphate as fatty acyl donor, but not acyl-CoA or acyl-ACP. In Burkholderia cenocepacia (strain ATCC BAA-245 / DSM 16553 / LMG 16656 / NCTC 13227 / J2315 / CF5610) (Burkholderia cepacia (strain J2315)), this protein is Glycerol-3-phosphate acyltransferase.